The sequence spans 439 residues: Maintenance of mitochondrial morphology protein 1 (439 aa).

Residues 1 to 76 lie on the Lumenal side of the membrane; the sequence is MSQDLIETTA…NGNTWSFTQG (76 aa). A helical membrane pass occupies residues 77-97; the sequence is LVIGQVSVIFIIIVFVKFFVF. Topologically, residues 98–439 are cytoplasmic; the sequence is ADSSSHIPTK…TPGEYVNSNI (342 aa). 3 disordered regions span residues 125–145, 309–336, and 405–425; these read KHSN…SLDS, MNGY…DGGT, and REPV…GTSA. An SMP-LTD domain is found at 165–395; that stretch reads ASESLDWFNV…EPRFQVVRLP (231 aa). Composition is skewed to low complexity over residues 315–326 and 410–424; these read ENANGDGASSSN and KKTT…NGTS.

The protein belongs to the MMM1 family. Homodimer. Component of the ER-mitochondria encounter structure (ERMES) or MDM complex, composed of MMM1, MDM10, MDM12 and MDM34. An MMM1 homodimer associates with one molecule of MDM12 on each side in a pairwise head-to-tail manner, and the SMP-LTD domains of MMM1 and MDM12 generate a continuous hydrophobic tunnel for phospholipid trafficking.

The protein resides in the endoplasmic reticulum membrane. Functionally, component of the ERMES/MDM complex, which serves as a molecular tether to connect the endoplasmic reticulum (ER) and mitochondria. Components of this complex are involved in the control of mitochondrial shape and protein biogenesis, and function in nonvesicular lipid trafficking between the ER and mitochondria. The MDM12-MMM1 subcomplex functions in the major beta-barrel assembly pathway that is responsible for biogenesis of all outer membrane beta-barrel proteins, and acts in a late step after the SAM complex. The MDM10-MDM12-MMM1 subcomplex further acts in the TOM40-specific pathway after the action of the MDM12-MMM1 complex. Essential for establishing and maintaining the structure of mitochondria and maintenance of mtDNA nucleoids. This is Maintenance of mitochondrial morphology protein 1 from Candida albicans (strain SC5314 / ATCC MYA-2876) (Yeast).